We begin with the raw amino-acid sequence, 145 residues long: D-aminoacyl-tRNA deacylase (145 aa).

The short motif at 137-138 (GP) is the Gly-cisPro motif, important for rejection of L-amino acids element.

This sequence belongs to the DTD family. In terms of assembly, homodimer.

The protein resides in the cytoplasm. The enzyme catalyses glycyl-tRNA(Ala) + H2O = tRNA(Ala) + glycine + H(+). It catalyses the reaction a D-aminoacyl-tRNA + H2O = a tRNA + a D-alpha-amino acid + H(+). An aminoacyl-tRNA editing enzyme that deacylates mischarged D-aminoacyl-tRNAs. Also deacylates mischarged glycyl-tRNA(Ala), protecting cells against glycine mischarging by AlaRS. Acts via tRNA-based rather than protein-based catalysis; rejects L-amino acids rather than detecting D-amino acids in the active site. By recycling D-aminoacyl-tRNA to D-amino acids and free tRNA molecules, this enzyme counteracts the toxicity associated with the formation of D-aminoacyl-tRNA entities in vivo and helps enforce protein L-homochirality. This is D-aminoacyl-tRNA deacylase from Salmonella choleraesuis (strain SC-B67).